A 274-amino-acid chain; its full sequence is Probable S-adenosylmethionine-dependent methyltransferase MT3114 (274 aa).

The segment at M1–S24 is disordered.

Belongs to the methyltransferase superfamily.

In terms of biological role, probable S-adenosylmethionine-dependent methyltransferase required for the 6-O-methylation of the polysaccharide backbone of 6-O-methylglucosyl lipopolysaccharides (MGLP). This is Probable S-adenosylmethionine-dependent methyltransferase MT3114 from Mycobacterium tuberculosis (strain CDC 1551 / Oshkosh).